Reading from the N-terminus, the 201-residue chain is Small ribosomal subunit protein uS4 (201 aa).

The tract at residues serine 27 to tyrosine 47 is disordered. In terms of domain architecture, S4 RNA-binding spans glycine 92 to alanine 152.

This sequence belongs to the universal ribosomal protein uS4 family. Part of the 30S ribosomal subunit. Contacts protein S5. The interaction surface between S4 and S5 is involved in control of translational fidelity.

In terms of biological role, one of the primary rRNA binding proteins, it binds directly to 16S rRNA where it nucleates assembly of the body of the 30S subunit. Its function is as follows. With S5 and S12 plays an important role in translational accuracy. The protein is Small ribosomal subunit protein uS4 of Parabacteroides distasonis (strain ATCC 8503 / DSM 20701 / CIP 104284 / JCM 5825 / NCTC 11152).